We begin with the raw amino-acid sequence, 517 residues long: MSMNKGPTLLDGDLPEQENVLQRVLQLPVVSGTCECFQKTYNSTKEAHPLVASVCNAYEKGVQGASNLAAWSMEPVVRRLSTQFTAANELACRGLDHLEEKIPALQYPPEKIASELKGTISTRLRSARNSISVPIASTSDKVLGATLAGCELALGMAKETAEYAANTRVGRLASGGADLALGSIEKVVEYLLPPDKVESAPSSGRQKTQKAPKAKPSLLRRVSTLANTLSRHTMQTTARALKRGHSLAMWIPGVAPLSSLAQWGASAAMQVVSRRQSEVRVPWLHNLAASKDENHEDQTDTEGEETDEEEEEEESEAEENVLREVTALPTPLGFLGGVVHTVQKTLQNTISAVTWAPAAVLGTVGRILHLTPAQAVSSTKGRAMSLSDALKGVTDNVVDTVVHYVPLPRLSLMEPESEFQDIDNPPAEVERKGSGSRPASPESTARPGQPRAACAVRGLSAPSCPDLDDKTETSARPGLLAMPREKPARRVSDSFFRPSVMEPILGRTQYSQLRKKS.

Ser-81 bears the Phosphoserine mark. At Thr-85 the chain carries Phosphothreonine. Phosphoserine is present on residues Ser-126, Ser-130, Ser-132, Ser-137, and Ser-174. Residues 197–217 are disordered; sequence VESAPSSGRQKTQKAPKAKPS. A phosphothreonine mark is found at Thr-224, Thr-299, and Thr-301. The segment at 285-321 is disordered; that stretch reads HNLAASKDENHEDQTDTEGEETDEEEEEEESEAEENV. The interval 291 to 322 is required for interaction with CIDEC; sequence KDENHEDQTDTEGEETDEEEEEEESEAEENVL. The segment covering 299–319 has biased composition (acidic residues); sequence TDTEGEETDEEEEEEESEAEE. Residues Ser-315, Ser-385, Ser-387, Pro-408, Ser-411, Ser-434, Ser-436, Ser-440, Ser-460, Ser-492, and Ser-494 each carry the phosphoserine modification. Residues 415–495 form a disordered region; that stretch reads PESEFQDIDN…KPARRVSDSF (81 aa). Over residues 483 to 492 the composition is skewed to basic and acidic residues; that stretch reads PREKPARRVS.

Belongs to the perilipin family. As to quaternary structure, interacts with ABHD5. Interacts with CIDEC. Interacts with AQP7. Major cAMP-dependent protein kinase substrate in adipocytes, also dephosphorylated by PP1. When phosphorylated, may be maximally sensitive to HSL. When unphosphorylated, may play a role in the inhibition of lipolysis, by acting as a barrier in lipid droplet. Post-translationally, the N-terminus is blocked. Adipocytes.

It localises to the endoplasmic reticulum. The protein resides in the lipid droplet. Functionally, modulator of adipocyte lipid metabolism. Coats lipid storage droplets to protect them from breakdown by hormone-sensitive lipase (HSL). Its absence may result in leanness. Plays a role in unilocular lipid droplet formation by activating CIDEC. Their interaction promotes lipid droplet enlargement and directional net neutral lipid transfer. May modulate lipolysis and triglyceride levels. This Rattus norvegicus (Rat) protein is Perilipin-1 (Plin1).